The following is a 458-amino-acid chain: BPI fold-containing family B member 2 (458 aa).

The N-terminal stretch at 1 to 20 (MAWASRLGLLLALLLPVVGA) is a signal peptide. Position 52 is a phosphothreonine; by FAM20C (Thr52). Ser60 carries the phosphoserine; by FAM20C modification. N-linked (GlcNAc...) asparagine glycans are attached at residues Asn96, Asn151, Asn293, and Asn332. An intrachain disulfide couples Cys137 to Cys174.

This sequence belongs to the BPI/LBP/Plunc superfamily. BPI/LBP family. In terms of tissue distribution, highly expressed in tonsils, especially in hypertrophic tonsils. Detected at very low levels in fetal liver.

It is found in the secreted. This is BPI fold-containing family B member 2 (BPIFB2) from Homo sapiens (Human).